Consider the following 185-residue polypeptide: uncharacterized protein (185 aa).

The next 3 helical transmembrane spans lie at 32–52 (LIFV…LLAF), 66–86 (LVTL…VLAV), and 155–175 (IGYG…FLVV).

The protein resides in the cell membrane. This is an uncharacterized protein from Bacillus subtilis (strain 168).